Reading from the N-terminus, the 389-residue chain is S-adenosylmethionine synthase (389 aa).

ATP is bound at residue histidine 19. Mg(2+) is bound at residue aspartate 21. Residue glutamate 47 participates in K(+) binding. The L-methionine site is built by glutamate 60 and glutamine 103. The segment at 103 to 113 (QSGDIAQGVDR) is flexible loop. Residues 168-170 (DGK), 234-235 (RF), aspartate 243, 249-250 (RK), alanine 266, and lysine 270 each bind ATP. Aspartate 243 is an L-methionine binding site. An L-methionine-binding site is contributed by lysine 274.

It belongs to the AdoMet synthase family. In terms of assembly, homotetramer; dimer of dimers. Mg(2+) serves as cofactor. It depends on K(+) as a cofactor.

The protein localises to the cytoplasm. It carries out the reaction L-methionine + ATP + H2O = S-adenosyl-L-methionine + phosphate + diphosphate. The protein operates within amino-acid biosynthesis; S-adenosyl-L-methionine biosynthesis; S-adenosyl-L-methionine from L-methionine: step 1/1. In terms of biological role, catalyzes the formation of S-adenosylmethionine (AdoMet) from methionine and ATP. The overall synthetic reaction is composed of two sequential steps, AdoMet formation and the subsequent tripolyphosphate hydrolysis which occurs prior to release of AdoMet from the enzyme. This Nitratidesulfovibrio vulgaris (strain DSM 19637 / Miyazaki F) (Desulfovibrio vulgaris) protein is S-adenosylmethionine synthase.